A 157-amino-acid chain; its full sequence is 3-hydroxyacyl-[acyl-carrier-protein] dehydratase FabZ (157 aa).

The active site involves histidine 58.

It belongs to the thioester dehydratase family. FabZ subfamily.

Its subcellular location is the cytoplasm. It catalyses the reaction a (3R)-hydroxyacyl-[ACP] = a (2E)-enoyl-[ACP] + H2O. Involved in unsaturated fatty acids biosynthesis. Catalyzes the dehydration of short chain beta-hydroxyacyl-ACPs and long chain saturated and unsaturated beta-hydroxyacyl-ACPs. The chain is 3-hydroxyacyl-[acyl-carrier-protein] dehydratase FabZ from Brucella abortus biovar 1 (strain 9-941).